The following is a 727-amino-acid chain: DNA topoisomerase 3 (727 aa).

In terms of domain architecture, Toprim spans 3 to 136 (KTVVLAEKPS…IKRLWISSVT (134 aa)). Mg(2+) contacts are provided by glutamate 9 and aspartate 105. In terms of domain architecture, Topo IA-type catalytic spans 153 to 593 (YENLYHSAVA…DMKAYAHQTV (441 aa)). Residues 187-192 (SCGRVQ) are interaction with DNA. Tyrosine 310 serves as the catalytic O-(5'-phospho-DNA)-tyrosine intermediate. A compositionally biased stretch (basic and acidic residues) spans 685–699 (KRKNKDKARATKRDV). The tract at residues 685–714 (KRKNKDKARATKRDVSSYMKKQNKDEPINN) is disordered.

The protein belongs to the type IA topoisomerase family. Requires Mg(2+) as cofactor.

The catalysed reaction is ATP-independent breakage of single-stranded DNA, followed by passage and rejoining.. Functionally, releases the supercoiling and torsional tension of DNA, which is introduced during the DNA replication and transcription, by transiently cleaving and rejoining one strand of the DNA duplex. Introduces a single-strand break via transesterification at a target site in duplex DNA. The scissile phosphodiester is attacked by the catalytic tyrosine of the enzyme, resulting in the formation of a DNA-(5'-phosphotyrosyl)-enzyme intermediate and the expulsion of a 3'-OH DNA strand. The free DNA strand then undergoes passage around the unbroken strand, thus removing DNA supercoils. Finally, in the religation step, the DNA 3'-OH attacks the covalent intermediate to expel the active-site tyrosine and restore the DNA phosphodiester backbone. The polypeptide is DNA topoisomerase 3 (Bacillus subtilis (strain 168)).